Here is a 198-residue protein sequence, read N- to C-terminus: NAD(P)H dehydrogenase (quinone) (198 aa).

In terms of domain architecture, Flavodoxin-like spans I4 to V189. Residues S10–I15 and T78–F80 contribute to the FMN site. NAD(+) is bound at residue Y12. W98 lines the substrate pocket. FMN is bound by residues S113–G118 and H133.

The protein belongs to the WrbA family. Requires FMN as cofactor.

The catalysed reaction is a quinone + NADH + H(+) = a quinol + NAD(+). It carries out the reaction a quinone + NADPH + H(+) = a quinol + NADP(+). The sequence is that of NAD(P)H dehydrogenase (quinone) from Klebsiella pneumoniae (strain 342).